The chain runs to 484 residues: Coronin-1B (484 aa).

Residue S2 is modified to Phosphoserine. WD repeat units follow at residues 80–120 (GHTG…LTSP), 130–170 (GHTK…ELYR), 174–213 (LHPDLIYNVSWNHNGSLFCTACKDKSVRIIDPRRGTLVAE), 217–260 (AHEG…EPMA), and 265–305 (DSSN…PYIH). The stretch at 447–481 (KLEEVMHGLRALRVLVKEQGERISRLEEHLGRMEN) forms a coiled coil.

Belongs to the WD repeat coronin family. Forms homooligomers, but does not form complexes with the other coronins. Interacts with Arp2/3 complex components, including ACTR2, ARPC1B and ARPC2. Binds actin. Phosphorylation on Ser-2 regulates the interaction with the Arp2/3 complex and cell motility in fibroblasts. Phosphorylation does not seem to affect subcellular location.

It localises to the cytoplasm. The protein localises to the cytoskeleton. The protein resides in the stress fiber. Functionally, regulates leading edge dynamics and cell motility in fibroblasts. May be involved in cytokinesis and signal transduction. The polypeptide is Coronin-1B (Coro1b) (Rattus norvegicus (Rat)).